We begin with the raw amino-acid sequence, 67 residues long: Large ribosomal subunit protein bL35 (67 aa).

Over residues 1-16 the composition is skewed to basic residues; sequence MPKMKTKSGAKKRFRV. The segment at 1–25 is disordered; that stretch reads MPKMKTKSGAKKRFRVRPGGTVKRG.

The protein belongs to the bacterial ribosomal protein bL35 family.

The protein is Large ribosomal subunit protein bL35 of Polaromonas sp. (strain JS666 / ATCC BAA-500).